Consider the following 265-residue polypeptide: 4-hydroxy-tetrahydrodipicolinate reductase (265 aa).

NAD(+) contacts are provided by residues 7–12 (GASGRM) and Asp-33. Arg-34 contacts NADP(+). NAD(+) contacts are provided by residues 96 to 98 (GTT) and 120 to 123 (AANM). The active-site Proton donor/acceptor is His-153. His-154 provides a ligand contact to (S)-2,3,4,5-tetrahydrodipicolinate. The active-site Proton donor is Lys-157. 163 to 164 (GT) contributes to the (S)-2,3,4,5-tetrahydrodipicolinate binding site.

This sequence belongs to the DapB family.

It is found in the cytoplasm. The catalysed reaction is (S)-2,3,4,5-tetrahydrodipicolinate + NAD(+) + H2O = (2S,4S)-4-hydroxy-2,3,4,5-tetrahydrodipicolinate + NADH + H(+). It catalyses the reaction (S)-2,3,4,5-tetrahydrodipicolinate + NADP(+) + H2O = (2S,4S)-4-hydroxy-2,3,4,5-tetrahydrodipicolinate + NADPH + H(+). It functions in the pathway amino-acid biosynthesis; L-lysine biosynthesis via DAP pathway; (S)-tetrahydrodipicolinate from L-aspartate: step 4/4. Catalyzes the conversion of 4-hydroxy-tetrahydrodipicolinate (HTPA) to tetrahydrodipicolinate. This is 4-hydroxy-tetrahydrodipicolinate reductase from Burkholderia cenocepacia (strain ATCC BAA-245 / DSM 16553 / LMG 16656 / NCTC 13227 / J2315 / CF5610) (Burkholderia cepacia (strain J2315)).